Here is a 317-residue protein sequence, read N- to C-terminus: ATP synthase gamma chain (317 aa).

This sequence belongs to the ATPase gamma chain family. As to quaternary structure, F-type ATPases have 2 components, CF(1) - the catalytic core - and CF(0) - the membrane proton channel. CF(1) has five subunits: alpha(3), beta(3), gamma(1), delta(1), epsilon(1). CF(0) has three main subunits: a, b and c.

It localises to the cellular thylakoid membrane. Functionally, produces ATP from ADP in the presence of a proton gradient across the membrane. The gamma chain is believed to be important in regulating ATPase activity and the flow of protons through the CF(0) complex. This Synechococcus sp. (strain CC9902) protein is ATP synthase gamma chain.